Reading from the N-terminus, the 324-residue chain is Adenine deaminase (324 aa).

Positions 11, 13, and 189 each coordinate Zn(2+). Glutamate 192 (proton donor) is an active-site residue. Position 270 (aspartate 270) interacts with Zn(2+). Aspartate 271 contributes to the substrate binding site.

This sequence belongs to the metallo-dependent hydrolases superfamily. Adenosine and AMP deaminases family. Adenine deaminase type 2 subfamily. Zn(2+) is required as a cofactor.

The catalysed reaction is adenine + H2O + H(+) = hypoxanthine + NH4(+). In terms of biological role, catalyzes the hydrolytic deamination of adenine to hypoxanthine. Plays an important role in the purine salvage pathway and in nitrogen catabolism. This Sinorhizobium fredii (strain NBRC 101917 / NGR234) protein is Adenine deaminase.